We begin with the raw amino-acid sequence, 713 residues long: Putative ERAD-associated E3 ubiquitin-protein ligase component (713 aa).

The N-terminal stretch at 1–20 is a signal peptide; it reads MQLLNFLICLFFIFKRCVFT. Asparagine 48 and asparagine 123 each carry an N-linked (GlcNAc...) asparagine glycan. Sel1-like repeat units follow at residues 83 to 124 and 125 to 160; these read PESQ…TQNY and TYALLALAYKHLNGLSTPMSVDKGVELYKQVAHQIS. An N-linked (GlcNAc...) asparagine glycan is attached at asparagine 211. Sel1-like repeat units lie at residues 212–248, 280–315, 490–525, and 527–562; these read ISAHISLATIYQYGTPGKLKDIKLAVKHYLAAIRLVN, SIAAFRLGCMALHGELGKPDPSLAYAWFEYGVSLNH, IHSLIKIGDFYRMGLGTSAKPELAFSYYSQAAAIHP, and ALAYWRLGWMHEYGVGVPVDFEMAKKNYDNALMHDT. Asparagine 314 carries an N-linked (GlcNAc...) asparagine glycan. Positions 621–655 are disordered; the sequence is QLPPEPPTLQVDRTPQQPDPQETSESLPSPNTEEM. A compositionally biased stretch (polar residues) spans 631–652; the sequence is VDRTPQQPDPQETSESLPSPNT. Residues 671–691 form a helical membrane-spanning segment; it reads GRFLETACVTLIVVVVGLVLM.

It belongs to the sel-1 family.

Its subcellular location is the endoplasmic reticulum membrane. Functionally, component of the endoplasmic reticulum quality control (ERQC) system involved in ubiquitin-dependent degradation of missfolded endoplasmic reticulum proteins. The protein is Putative ERAD-associated E3 ubiquitin-protein ligase component of Schizosaccharomyces pombe (strain 972 / ATCC 24843) (Fission yeast).